Consider the following 255-residue polypeptide: Proteasome subunit alpha (255 aa).

The tract at residues 228–255 is disordered; that stretch reads LLASPAGTSGPTGEPGPAGTAATDGGDL. The segment covering 232–255 has biased composition (low complexity); it reads PAGTSGPTGEPGPAGTAATDGGDL.

Belongs to the peptidase T1A family. In terms of assembly, the 20S proteasome core is composed of 14 alpha and 14 beta subunits that assemble into four stacked heptameric rings, resulting in a barrel-shaped structure. The two inner rings, each composed of seven catalytic beta subunits, are sandwiched by two outer rings, each composed of seven alpha subunits. The catalytic chamber with the active sites is on the inside of the barrel. Has a gated structure, the ends of the cylinder being occluded by the N-termini of the alpha-subunits. Is capped by the proteasome-associated ATPase, ARC.

The protein localises to the cytoplasm. The protein operates within protein degradation; proteasomal Pup-dependent pathway. With respect to regulation, the formation of the proteasomal ATPase ARC-20S proteasome complex, likely via the docking of the C-termini of ARC into the intersubunit pockets in the alpha-rings, may trigger opening of the gate for substrate entry. Interconversion between the open-gate and close-gate conformations leads to a dynamic regulation of the 20S proteasome proteolysis activity. Functionally, component of the proteasome core, a large protease complex with broad specificity involved in protein degradation. This Sanguibacter keddieii (strain ATCC 51767 / DSM 10542 / NCFB 3025 / ST-74) protein is Proteasome subunit alpha.